The primary structure comprises 254 residues: Phosphoribosylaminoimidazole-succinocarboxamide synthase (254 aa).

It belongs to the SAICAR synthetase family.

The enzyme catalyses 5-amino-1-(5-phospho-D-ribosyl)imidazole-4-carboxylate + L-aspartate + ATP = (2S)-2-[5-amino-1-(5-phospho-beta-D-ribosyl)imidazole-4-carboxamido]succinate + ADP + phosphate + 2 H(+). Its pathway is purine metabolism; IMP biosynthesis via de novo pathway; 5-amino-1-(5-phospho-D-ribosyl)imidazole-4-carboxamide from 5-amino-1-(5-phospho-D-ribosyl)imidazole-4-carboxylate: step 1/2. In Gluconobacter oxydans (strain 621H) (Gluconobacter suboxydans), this protein is Phosphoribosylaminoimidazole-succinocarboxamide synthase.